Here is a 700-residue protein sequence, read N- to C-terminus: Elongation factor G (700 aa).

The tr-type G domain occupies 10–285; it reads DRTRNIGIMA…AVIDYLPSPL (276 aa). Residues 19–26, 83–87, and 137–140 contribute to the GTP site; these read AHIDAGKT, DTPGH, and NKMD.

It belongs to the TRAFAC class translation factor GTPase superfamily. Classic translation factor GTPase family. EF-G/EF-2 subfamily.

Its subcellular location is the cytoplasm. In terms of biological role, catalyzes the GTP-dependent ribosomal translocation step during translation elongation. During this step, the ribosome changes from the pre-translocational (PRE) to the post-translocational (POST) state as the newly formed A-site-bound peptidyl-tRNA and P-site-bound deacylated tRNA move to the P and E sites, respectively. Catalyzes the coordinated movement of the two tRNA molecules, the mRNA and conformational changes in the ribosome. The chain is Elongation factor G from Lacticaseibacillus paracasei (strain ATCC 334 / BCRC 17002 / CCUG 31169 / CIP 107868 / KCTC 3260 / NRRL B-441) (Lactobacillus paracasei).